The chain runs to 148 residues: Large ribosomal subunit protein uL15 (148 aa).

Residues 1–51 (MNLSSLKPAEGAVKSRKRIGRGPGSGLGGTSTRGHKGAKSRSGYSKKIGFE) are disordered. The segment covering 21-31 (RGPGSGLGGTS) has biased composition (gly residues).

It belongs to the universal ribosomal protein uL15 family. Part of the 50S ribosomal subunit.

Its function is as follows. Binds to the 23S rRNA. The sequence is that of Large ribosomal subunit protein uL15 from Porphyromonas gingivalis (strain ATCC 33277 / DSM 20709 / CIP 103683 / JCM 12257 / NCTC 11834 / 2561).